The sequence spans 209 residues: Endoplasmic reticulum vesicle protein 25 (209 aa).

The N-terminal stretch at 1 to 18 (MKYTTFGIISLFLSVTWA) is a signal peptide. Topologically, residues 19-178 (LRFELAASFE…TNESTNRRVR (160 aa)) are lumenal. The GOLD domain occupies 31–119 (PFCIRDFVEA…MRNVEVNIES (89 aa)). Residues 179–199 (NFSMAVIVVFAALCAWQLNYL) form a helical membrane-spanning segment. Residues 200–209 (KNYFRAKHII) lie on the Cytoplasmic side of the membrane.

It belongs to the EMP24/GP25L family.

The protein resides in the endoplasmic reticulum membrane. It is found in the golgi apparatus membrane. Its function is as follows. Constituent of COPII-coated endoplasmic reticulum-derived transport vesicles. Required for efficient transport of a subset of secretory proteins to the Golgi. Facilitates retrograde transport from the Golgi to the endoplasmic reticulum. The sequence is that of Endoplasmic reticulum vesicle protein 25 (ERV25) from Eremothecium gossypii (strain ATCC 10895 / CBS 109.51 / FGSC 9923 / NRRL Y-1056) (Yeast).